Consider the following 391-residue polypeptide: Glutamate 5-kinase (391 aa).

Lys-17 serves as a coordination point for ATP. Substrate is bound by residues Ser-57, Asp-144, and Asn-156. ATP contacts are provided by residues 176–177 (SD) and 216–222 (TGGMTTK). Residues 278–356 (QGQIVIDDGA…AWLAAEMGPA (79 aa)) form the PUA domain. A disordered region spans residues 370–391 (SRRRKAEPSSRNQKSSGSRVTS). The span at 378 to 391 (SSRNQKSSGSRVTS) shows a compositional bias: polar residues.

It belongs to the glutamate 5-kinase family.

Its subcellular location is the cytoplasm. It carries out the reaction L-glutamate + ATP = L-glutamyl 5-phosphate + ADP. It functions in the pathway amino-acid biosynthesis; L-proline biosynthesis; L-glutamate 5-semialdehyde from L-glutamate: step 1/2. Catalyzes the transfer of a phosphate group to glutamate to form L-glutamate 5-phosphate. This chain is Glutamate 5-kinase, found in Cutibacterium acnes (strain DSM 16379 / KPA171202) (Propionibacterium acnes).